The primary structure comprises 301 residues: Sulfate adenylyltransferase subunit 2 (301 aa).

Residues 278-301 (ERQGRLIDGDEPASMERKKREGYF) are disordered.

This sequence belongs to the PAPS reductase family. CysD subfamily. As to quaternary structure, sulfate-activating enzymes, NodP and NodQ, may be physically associated.

The enzyme catalyses sulfate + ATP + H(+) = adenosine 5'-phosphosulfate + diphosphate. In terms of biological role, proposed to provide activated sulfate for transfer to nod factor. This chain is Sulfate adenylyltransferase subunit 2 (nodP), found in Azospirillum brasilense.